The sequence spans 1212 residues: Dermatan-sulfate epimerase-like protein (1212 aa).

The signal sequence occupies residues 1-20 (MALMFTGHLLFLALLMFAFS). N-linked (GlcNAc...) asparagine glycosylation is found at asparagine 28, asparagine 666, asparagine 688, and asparagine 709. 2 helical membrane passes run 764 to 784 (IIFP…CISL) and 803 to 823 (WILI…WSTC). A glycan (N-linked (GlcNAc...) asparagine) is linked at asparagine 874.

Belongs to the dermatan-sulfate isomerase family. Expressed in different brain areas as well as in multiple other peripheral tissues.

Its subcellular location is the membrane. In Homo sapiens (Human), this protein is Dermatan-sulfate epimerase-like protein (DSEL).